The chain runs to 100 residues: Small ribosomal subunit protein uS14c (100 aa).

It belongs to the universal ribosomal protein uS14 family. In terms of assembly, part of the 30S ribosomal subunit.

Its subcellular location is the plastid. It localises to the chloroplast. Its function is as follows. Binds 16S rRNA, required for the assembly of 30S particles. The polypeptide is Small ribosomal subunit protein uS14c (Chlorella vulgaris (Green alga)).